The primary structure comprises 194 residues: Fe/S biogenesis protein NfuA (194 aa).

Positions 151 and 154 each coordinate [4Fe-4S] cluster.

This sequence belongs to the NfuA family. As to quaternary structure, homodimer. [4Fe-4S] cluster serves as cofactor.

Its function is as follows. Involved in iron-sulfur cluster biogenesis. Binds a 4Fe-4S cluster, can transfer this cluster to apoproteins, and thereby intervenes in the maturation of Fe/S proteins. Could also act as a scaffold/chaperone for damaged Fe/S proteins. The chain is Fe/S biogenesis protein NfuA from Actinobacillus succinogenes (strain ATCC 55618 / DSM 22257 / CCUG 43843 / 130Z).